The chain runs to 273 residues: Dermonecrotic toxin LapSicTox-alphaIB1aiv (273 aa).

His-5 is a catalytic residue. Glu-25 and Asp-27 together coordinate Mg(2+). Residue His-41 is the Nucleophile of the active site. 2 cysteine pairs are disulfide-bonded: Cys-45-Cys-51 and Cys-47-Cys-190. Asp-85 contributes to the Mg(2+) binding site. The N-linked (GlcNAc...) asparagine glycan is linked to Asn-250.

It belongs to the arthropod phospholipase D family. Class II subfamily. The cofactor is Mg(2+). Expressed by the venom gland.

The protein localises to the secreted. It carries out the reaction an N-(acyl)-sphingosylphosphocholine = an N-(acyl)-sphingosyl-1,3-cyclic phosphate + choline. The catalysed reaction is an N-(acyl)-sphingosylphosphoethanolamine = an N-(acyl)-sphingosyl-1,3-cyclic phosphate + ethanolamine. It catalyses the reaction a 1-acyl-sn-glycero-3-phosphocholine = a 1-acyl-sn-glycero-2,3-cyclic phosphate + choline. The enzyme catalyses a 1-acyl-sn-glycero-3-phosphoethanolamine = a 1-acyl-sn-glycero-2,3-cyclic phosphate + ethanolamine. Its function is as follows. Dermonecrotic toxins cleave the phosphodiester linkage between the phosphate and headgroup of certain phospholipids (sphingolipid and lysolipid substrates), forming an alcohol (often choline) and a cyclic phosphate. This toxin acts on sphingomyelin (SM). It may also act on ceramide phosphoethanolamine (CPE), lysophosphatidylcholine (LPC) and lysophosphatidylethanolamine (LPE), but not on lysophosphatidylserine (LPS), and lysophosphatidylglycerol (LPG). It acts by transphosphatidylation, releasing exclusively cyclic phosphate products as second products. Induces dermonecrosis, hemolysis, increased vascular permeability, edema, inflammatory response, and platelet aggregation. The chain is Dermonecrotic toxin LapSicTox-alphaIB1aiv from Loxosceles apachea (Apache recluse spider).